Here is a 206-residue protein sequence, read N- to C-terminus: High frequency lysogenization protein HflD homolog (206 aa).

It belongs to the HflD family.

The protein resides in the cytoplasm. Its subcellular location is the cell inner membrane. The polypeptide is High frequency lysogenization protein HflD homolog (Pseudomonas syringae pv. syringae (strain B728a)).